The chain runs to 44 residues: HNDLIRAGLTVCLSENRKRLTCSGLLNMAGSVCCKVDTSCCSSQ.

In terms of processing, contains 3 disulfide bonds. In terms of tissue distribution, expressed by the venom duct.

Its subcellular location is the secreted. The polypeptide is Conotoxin S5.1 (Conus striatus (Striated cone)).